Here is a 105-residue protein sequence, read N- to C-terminus: Met repressor (105 aa).

This sequence belongs to the MetJ family. In terms of assembly, homodimer.

It localises to the cytoplasm. In terms of biological role, this regulatory protein, when combined with SAM (S-adenosylmethionine) represses the expression of the methionine regulon and of enzymes involved in SAM synthesis. The protein is Met repressor of Vibrio vulnificus (strain CMCP6).